The following is a 120-amino-acid chain: Large ribosomal subunit protein uL18 (120 aa).

The protein belongs to the universal ribosomal protein uL18 family. As to quaternary structure, part of the 50S ribosomal subunit; part of the 5S rRNA/L5/L18/L25 subcomplex. Contacts the 5S and 23S rRNAs.

Functionally, this is one of the proteins that bind and probably mediate the attachment of the 5S RNA into the large ribosomal subunit, where it forms part of the central protuberance. The polypeptide is Large ribosomal subunit protein uL18 (Bartonella bacilliformis (strain ATCC 35685 / KC583 / Herrer 020/F12,63)).